A 325-amino-acid polypeptide reads, in one-letter code: MPKTERRTFLLDFEKPLSELESRIHQIRDLAAENNVDVSEQIQQLEARADQLREEIFSTLTPAQRLQLARHPRRPSTLDYVQMMADEWFELHGDRGGSDDPALIGGVARFDGQPVMMLGHQKGRDTKDNVARNFGMPAPGGYRKAMRLMDHANRFGMPILTFIDTPGAWAGLEAEKLGQGEAIAFNLREMFSLDVPIICTVIGEGGSGGALGIGVGDRVLMLKNSVYTVATPEACAAILWKDAGKSEQAAAALKITAEDLKSLEIIDEIVPEPASCAHADPIGAAQLLKAAIQDNLQALLKLTPERRRELRYQRFRKIGVFLESS.

Residues 44-298 (QLEARADQLR…KAAIQDNLQA (255 aa)) enclose the CoA carboxyltransferase C-terminal domain.

The protein belongs to the AccA family. Acetyl-CoA carboxylase is a heterohexamer composed of biotin carboxyl carrier protein (AccB), biotin carboxylase (AccC) and two subunits each of ACCase subunit alpha (AccA) and ACCase subunit beta (AccD).

It is found in the cytoplasm. The enzyme catalyses N(6)-carboxybiotinyl-L-lysyl-[protein] + acetyl-CoA = N(6)-biotinyl-L-lysyl-[protein] + malonyl-CoA. It participates in lipid metabolism; malonyl-CoA biosynthesis; malonyl-CoA from acetyl-CoA: step 1/1. Its function is as follows. Component of the acetyl coenzyme A carboxylase (ACC) complex. First, biotin carboxylase catalyzes the carboxylation of biotin on its carrier protein (BCCP) and then the CO(2) group is transferred by the carboxyltransferase to acetyl-CoA to form malonyl-CoA. In Picosynechococcus sp. (strain ATCC 27264 / PCC 7002 / PR-6) (Agmenellum quadruplicatum), this protein is Acetyl-coenzyme A carboxylase carboxyl transferase subunit alpha.